The sequence spans 149 residues: Transcriptional repressor NrdR (149 aa).

Residues 3-34 (CPFCAAEETKVVDSRLAADGYQIRRRRECTSC) fold into a zinc finger. The ATP-cone domain occupies 49–139 (PYVIKNNGNR…VYLSFDDIEE (91 aa)).

This sequence belongs to the NrdR family. Requires Zn(2+) as cofactor.

Negatively regulates transcription of bacterial ribonucleotide reductase nrd genes and operons by binding to NrdR-boxes. The chain is Transcriptional repressor NrdR from Actinobacillus pleuropneumoniae serotype 5b (strain L20).